The chain runs to 248 residues: 3-deoxy-manno-octulosonate cytidylyltransferase (248 aa).

Belongs to the KdsB family.

The protein resides in the cytoplasm. It carries out the reaction 3-deoxy-alpha-D-manno-oct-2-ulosonate + CTP = CMP-3-deoxy-beta-D-manno-octulosonate + diphosphate. It participates in nucleotide-sugar biosynthesis; CMP-3-deoxy-D-manno-octulosonate biosynthesis; CMP-3-deoxy-D-manno-octulosonate from 3-deoxy-D-manno-octulosonate and CTP: step 1/1. Its pathway is bacterial outer membrane biogenesis; lipopolysaccharide biosynthesis. In terms of biological role, activates KDO (a required 8-carbon sugar) for incorporation into bacterial lipopolysaccharide in Gram-negative bacteria. The polypeptide is 3-deoxy-manno-octulosonate cytidylyltransferase (Escherichia coli O127:H6 (strain E2348/69 / EPEC)).